A 250-amino-acid polypeptide reads, in one-letter code: Ubiquinone/menaquinone biosynthesis C-methyltransferase UbiE (250 aa).

Residues Thr73, Asp94, 122-123 (NA), and Ser139 contribute to the S-adenosyl-L-methionine site.

It belongs to the class I-like SAM-binding methyltransferase superfamily. MenG/UbiE family.

It catalyses the reaction a 2-demethylmenaquinol + S-adenosyl-L-methionine = a menaquinol + S-adenosyl-L-homocysteine + H(+). The catalysed reaction is a 2-methoxy-6-(all-trans-polyprenyl)benzene-1,4-diol + S-adenosyl-L-methionine = a 5-methoxy-2-methyl-3-(all-trans-polyprenyl)benzene-1,4-diol + S-adenosyl-L-homocysteine + H(+). Its pathway is quinol/quinone metabolism; menaquinone biosynthesis; menaquinol from 1,4-dihydroxy-2-naphthoate: step 2/2. It functions in the pathway cofactor biosynthesis; ubiquinone biosynthesis. In terms of biological role, methyltransferase required for the conversion of demethylmenaquinol (DMKH2) to menaquinol (MKH2) and the conversion of 2-polyprenyl-6-methoxy-1,4-benzoquinol (DDMQH2) to 2-polyprenyl-3-methyl-6-methoxy-1,4-benzoquinol (DMQH2). The polypeptide is Ubiquinone/menaquinone biosynthesis C-methyltransferase UbiE (Francisella tularensis subsp. novicida (strain U112)).